The primary structure comprises 392 residues: Imidazolonepropionase (392 aa).

The Fe(3+) site is built by H70 and H72. 2 residues coordinate Zn(2+): H70 and H72. 4-imidazolone-5-propanoate contacts are provided by R79, Y137, and H164. Position 137 (Y137) interacts with N-formimidoyl-L-glutamate. H227 serves as a coordination point for Fe(3+). A Zn(2+)-binding site is contributed by H227. Q230 contributes to the 4-imidazolone-5-propanoate binding site. Fe(3+) is bound at residue D301. Zn(2+) is bound at residue D301. N303 and G305 together coordinate N-formimidoyl-L-glutamate. T306 is a 4-imidazolone-5-propanoate binding site.

The protein belongs to the metallo-dependent hydrolases superfamily. HutI family. The cofactor is Zn(2+). Fe(3+) is required as a cofactor.

It localises to the cytoplasm. The enzyme catalyses 4-imidazolone-5-propanoate + H2O = N-formimidoyl-L-glutamate. Its pathway is amino-acid degradation; L-histidine degradation into L-glutamate; N-formimidoyl-L-glutamate from L-histidine: step 3/3. In terms of biological role, catalyzes the hydrolytic cleavage of the carbon-nitrogen bond in imidazolone-5-propanoate to yield N-formimidoyl-L-glutamate. It is the third step in the universal histidine degradation pathway. This chain is Imidazolonepropionase, found in Nocardia farcinica (strain IFM 10152).